The following is a 380-amino-acid chain: Cytochrome b (380 aa).

The next 4 helical transmembrane spans lie at 34–54, 78–99, 114–134, and 179–199; these read FGSLLAVCLTTQILTGLLLAM, WLIRNLHANGASFFFICIFLHI, WNTGVILLLTLMATAFVGYVL, and FFALHFLLPFVITGITITHLM. Histidine 84 and histidine 98 together coordinate heme b. Heme b-binding residues include histidine 183 and histidine 197. Histidine 202 lines the a ubiquinone pocket. The next 4 helical transmembrane spans lie at 227–247, 289–309, 321–341, and 348–368; these read LKDILGLALMLTPFLTLALFS, LGGVLALAASVLILLLIPFLH, LSQALFWLLVANLLILTWVGS, and FIIIGQMASLSYFTILLILFP.

This sequence belongs to the cytochrome b family. The cytochrome bc1 complex contains 11 subunits: 3 respiratory subunits (MT-CYB, CYC1 and UQCRFS1), 2 core proteins (UQCRC1 and UQCRC2) and 6 low-molecular weight proteins (UQCRH/QCR6, UQCRB/QCR7, UQCRQ/QCR8, UQCR10/QCR9, UQCR11/QCR10 and a cleavage product of UQCRFS1). This cytochrome bc1 complex then forms a dimer. Heme b is required as a cofactor.

The protein localises to the mitochondrion inner membrane. Its function is as follows. Component of the ubiquinol-cytochrome c reductase complex (complex III or cytochrome b-c1 complex) that is part of the mitochondrial respiratory chain. The b-c1 complex mediates electron transfer from ubiquinol to cytochrome c. Contributes to the generation of a proton gradient across the mitochondrial membrane that is then used for ATP synthesis. This is Cytochrome b (MT-CYB) from Syrmaticus reevesii (Reeves's pheasant).